The following is a 232-amino-acid chain: Orotidine 5'-phosphate decarboxylase (232 aa).

Substrate-binding positions include D13, K35, 62–71 (DLKFHDIPNT), T121, R182, Q191, G211, and R212. K64 (proton donor) is an active-site residue.

It belongs to the OMP decarboxylase family. Type 1 subfamily. Homodimer.

The catalysed reaction is orotidine 5'-phosphate + H(+) = UMP + CO2. Its pathway is pyrimidine metabolism; UMP biosynthesis via de novo pathway; UMP from orotate: step 2/2. Catalyzes the decarboxylation of orotidine 5'-monophosphate (OMP) to uridine 5'-monophosphate (UMP). The sequence is that of Orotidine 5'-phosphate decarboxylase from Acinetobacter baumannii (strain AB0057).